The following is a 231-amino-acid chain: 5'-methylthioadenosine/S-adenosylhomocysteine nucleosidase (231 aa).

The active-site Proton acceptor is the Glu-12. Substrate-binding positions include Gly-78, Ile-153, and 174–175 (ME). The active-site Proton donor is the Asp-198.

It belongs to the PNP/UDP phosphorylase family. MtnN subfamily.

The catalysed reaction is S-adenosyl-L-homocysteine + H2O = S-(5-deoxy-D-ribos-5-yl)-L-homocysteine + adenine. It catalyses the reaction S-methyl-5'-thioadenosine + H2O = 5-(methylsulfanyl)-D-ribose + adenine. The enzyme catalyses 5'-deoxyadenosine + H2O = 5-deoxy-D-ribose + adenine. It participates in amino-acid biosynthesis; L-methionine biosynthesis via salvage pathway; S-methyl-5-thio-alpha-D-ribose 1-phosphate from S-methyl-5'-thioadenosine (hydrolase route): step 1/2. Catalyzes the irreversible cleavage of the glycosidic bond in both 5'-methylthioadenosine (MTA) and S-adenosylhomocysteine (SAH/AdoHcy) to adenine and the corresponding thioribose, 5'-methylthioribose and S-ribosylhomocysteine, respectively. Also cleaves 5'-deoxyadenosine, a toxic by-product of radical S-adenosylmethionine (SAM) enzymes, into 5-deoxyribose and adenine. This Shewanella putrefaciens (strain CN-32 / ATCC BAA-453) protein is 5'-methylthioadenosine/S-adenosylhomocysteine nucleosidase.